The chain runs to 119 residues: Large ribosomal subunit protein uL18 (119 aa).

Belongs to the universal ribosomal protein uL18 family. As to quaternary structure, part of the 50S ribosomal subunit; part of the 5S rRNA/L5/L18/L25 subcomplex. Contacts the 5S and 23S rRNAs.

Functionally, this is one of the proteins that bind and probably mediate the attachment of the 5S RNA into the large ribosomal subunit, where it forms part of the central protuberance. This Cupriavidus metallidurans (strain ATCC 43123 / DSM 2839 / NBRC 102507 / CH34) (Ralstonia metallidurans) protein is Large ribosomal subunit protein uL18.